Reading from the N-terminus, the 358-residue chain is Glutamate 5-kinase (358 aa).

Lys-9 contributes to the ATP binding site. The substrate site is built by Ser-49, Asp-136, and Asn-148. Residues 168 to 169 and 210 to 216 each bind ATP; these read TD and TGGMTTK. The region spanning 275–353 is the PUA domain; that stretch reads DAAVEVDAGA…RAEGVLIHRN (79 aa).

This sequence belongs to the glutamate 5-kinase family.

The protein localises to the cytoplasm. The enzyme catalyses L-glutamate + ATP = L-glutamyl 5-phosphate + ADP. It participates in amino-acid biosynthesis; L-proline biosynthesis; L-glutamate 5-semialdehyde from L-glutamate: step 1/2. In terms of biological role, catalyzes the transfer of a phosphate group to glutamate to form L-glutamate 5-phosphate. This chain is Glutamate 5-kinase, found in Streptococcus suis (strain 05ZYH33).